The sequence spans 313 residues: Ribosomal RNA small subunit methyltransferase H (313 aa).

Residues 33–35 (GGH), Asp-53, Phe-80, Asp-102, and Gln-109 contribute to the S-adenosyl-L-methionine site. The interval 291-313 (SDEEMRANPRAQSAKLRAAEKIR) is disordered.

It belongs to the methyltransferase superfamily. RsmH family.

Its subcellular location is the cytoplasm. The catalysed reaction is cytidine(1402) in 16S rRNA + S-adenosyl-L-methionine = N(4)-methylcytidine(1402) in 16S rRNA + S-adenosyl-L-homocysteine + H(+). In terms of biological role, specifically methylates the N4 position of cytidine in position 1402 (C1402) of 16S rRNA. The sequence is that of Ribosomal RNA small subunit methyltransferase H from Heliobacterium modesticaldum (strain ATCC 51547 / Ice1).